We begin with the raw amino-acid sequence, 84 residues long: Protein myomixer (84 aa).

Topologically, residues 1–4 (MPTP) are cytoplasmic. A helical membrane pass occupies residues 5–25 (LLPLLLRLLLSCLLLPAARLA). The Extracellular portion of the chain corresponds to 26–84 (RQYLLPLLRRLARRLGSQDMREALLGCLLFILSQRHSPDAGEASRVDRLERRERLGPQK). The AxLyCxL signature appears at 48 to 57 (ALLGCLLFIL). Positions 62–84 (SPDAGEASRVDRLERRERLGPQK) are disordered.

This sequence belongs to the MYMX family. In terms of assembly, interacts with MYMK.

The protein resides in the cell membrane. Functionally, myoblast-specific protein that mediates myoblast fusion, an essential step for the formation of multi-nucleated muscle fibers. Involved in membrane fusion downstream of the lipid mixing step mediated by MYMK. Acts by generating membrane stresses via its extracellular C-terminus, leading to drive fusion pore formation. Acts independently of MYMK. Involved in skeletal muscle regeneration in response to injury by mediating the fusion of satellite cells, a population of muscle stem cells, with injured myofibers. This Homo sapiens (Human) protein is Protein myomixer.